Consider the following 102-residue polypeptide: Urease subunit beta (102 aa).

Belongs to the urease beta subunit family. As to quaternary structure, heterotrimer of UreA (gamma), UreB (beta) and UreC (alpha) subunits. Three heterotrimers associate to form the active enzyme.

It is found in the cytoplasm. The enzyme catalyses urea + 2 H2O + H(+) = hydrogencarbonate + 2 NH4(+). It participates in nitrogen metabolism; urea degradation; CO(2) and NH(3) from urea (urease route): step 1/1. This chain is Urease subunit beta, found in Bordetella pertussis (strain Tohama I / ATCC BAA-589 / NCTC 13251).